A 752-amino-acid chain; its full sequence is MGIKVQRPRCFFDIAINNQPAGRVVFELFSDVCPKTCENFRCLCTGEKGTGKSTQKPLHYKSCLFHRVVKDFMVQGGDFSEGNGRGGESIYGGFFEDESFAVKHNKEFLLSMANRGKDTNGSQFFITTKPTPHLDGHHVVFGQVISGQEVVREIENQKTDAASKPFAEVRILSCGELVPKSKVKKEEKKRHKSSSSSSSSDSDSSSDSQSSSDSSDSESASEEKSRKRKKKHRKNSRKHKKEKKKRKKSKKSPSSESEADNVDAQPQSTVRPEEIPPIPENRFLMRKSPPKADDKERKNRERERERECNPPNSQPASYQRRFLVTRFGRKIKGRGPRRYRTPSRSRSRDRFRRSETPPHWRQEMQRAQRMRVSSGERWIKGDKSELNEIKENQRSPVRVKEKKITDHRHMSESPNRKIEKEKKVKDHKSESKERDIRRNSEKDDKYNKNKVKKRGKSKSRSKSKERSKSKERDSKHSRHEDKRVRSRSKERDHETTKEKEKQLDSKGKDQERSRSKENSKQVESKSNEHDHSKSKEKDRRAQSRSRERDLTKSKHSYNSRTRERSRSRDRSRRVRSRSHDRDRSRSKEYHRYREQEYRRRGRSRSRDRRTPGRSRSKDRRRRRRDSRSSEREESQSRNKEKYRSQDSKSSHRKENSEGEKRMYSKSRDHSSSNNNREKKADIDQSPVSKTKQSSQDNEVKSSTLKNQEDEKTRSPVEKENQKSKGQENDHVHDKNKKCDHESSPGTDEDKSG.

Residues 11 to 176 form the PPIase cyclophilin-type domain; that stretch reads FFDIAINNQP…AEVRILSCGE (166 aa). Basic residues predominate over residues 182-193; it reads KVKKEEKKRHKS. The segment at 182-752 is disordered; it reads KVKKEEKKRH…SPGTDEDKSG (571 aa). Positions 194 to 214 are enriched in low complexity; sequence SSSSSSSDSDSSSDSQSSSDS. A compositionally biased stretch (basic residues) spans 226–251; sequence RKRKKKHRKNSRKHKKEKKKRKKSKK. 5 positions are modified to phosphoserine: serine 252, serine 254, serine 255, serine 257, and serine 288. Positions 290 to 308 are enriched in basic and acidic residues; sequence PKADDKERKNREREREREC. Phosphoserine is present on serine 313. The span at 327–345 shows a compositional bias: basic residues; it reads FGRKIKGRGPRRYRTPSRS. Basic and acidic residues-rich tracts occupy residues 346 to 366 and 377 to 447; these read RSRD…EMQR and RWIK…DKYN. Serine 354 is modified (phosphoserine). Threonine 356 is subject to Phosphothreonine. Serine 384 bears the Phosphoserine mark. Lysine 390 participates in a covalent cross-link: Glycyl lysine isopeptide (Lys-Gly) (interchain with G-Cter in SUMO2). Residues serine 395, serine 411, and serine 413 each carry the phosphoserine modification. The segment covering 448-461 has biased composition (basic residues); that stretch reads KNKVKKRGKSKSRS. Composition is skewed to basic and acidic residues over residues 462 to 552 and 577 to 598; these read KSKE…DLTK and RSHD…QEYR. The segment covering 599–625 has biased composition (basic residues); that stretch reads RRGRSRSRDRRTPGRSRSKDRRRRRRD. A compositionally biased stretch (basic and acidic residues) spans 626-682; the sequence is SRSSEREESQSRNKEKYRSQDSKSSHRKENSEGEKRMYSKSRDHSSSNNNREKKADI. Phosphoserine is present on residues serine 685 and serine 688. Residues 685–705 show a composition bias toward polar residues; the sequence is SPVSKTKQSSQDNEVKSSTLK. Lysine 691 is covalently cross-linked (Glycyl lysine isopeptide (Lys-Gly) (interchain with G-Cter in SUMO2)). Phosphoserine occurs at positions 694, 742, and 743. Basic and acidic residues predominate over residues 706-752; it reads NQEDEKTRSPVEKENQKSKGQENDHVHDKNKKCDHESSPGTDEDKSG. Threonine 746 is subject to Phosphothreonine. Position 751 is a phosphoserine (serine 751).

Interacts with CLK1, PNN and with the phosphorylated C-terminal domain of RNA polymerase II.

The protein resides in the nucleus matrix. Its subcellular location is the nucleus speckle. The enzyme catalyses [protein]-peptidylproline (omega=180) = [protein]-peptidylproline (omega=0). With respect to regulation, inhibited by cyclosporin A (CsA). Functionally, PPIase that catalyzes the cis-trans isomerization of proline imidic peptide bonds in oligopeptides and may therefore assist protein folding. May be implicated in the folding, transport, and assembly of proteins. May play an important role in the regulation of pre-mRNA splicing. This Rattus norvegicus (Rat) protein is Peptidyl-prolyl cis-trans isomerase G (Ppig).